Here is a 441-residue protein sequence, read N- to C-terminus: Serine/threonine-protein phosphatase 2A activator 1 (441 aa).

2 stretches are compositionally biased toward polar residues: residues 66–75 and 421–432; these read NIPPSNTTHS and QRQDDLNSTTYR. Disordered stretches follow at residues 66–100 and 421–441; these read NIPP…SSNQ and QRQD…LGRN.

It belongs to the PTPA-type PPIase family.

The protein localises to the cytoplasm. It localises to the nucleus. The catalysed reaction is [protein]-peptidylproline (omega=180) = [protein]-peptidylproline (omega=0). Its function is as follows. PPIases accelerate the folding of proteins. It catalyzes the cis-trans isomerization of proline imidic peptide bonds in oligopeptides. Acts as a regulatory subunit for PP2A-like phosphatases modulating their activity or substrate specificity, probably by inducing a conformational change in the catalytic subunit, a direct target of the PPIase. Can reactivate inactive phosphatase PP2A-phosphatase methylesterase complexes (PP2Ai) in presence of ATP and Mg(2+) by dissociating the inactive form from the complex. The protein is Serine/threonine-protein phosphatase 2A activator 1 (RRD1) of Debaryomyces hansenii (strain ATCC 36239 / CBS 767 / BCRC 21394 / JCM 1990 / NBRC 0083 / IGC 2968) (Yeast).